Reading from the N-terminus, the 351-residue chain is MIVTEALTKAFSGPFGAIEVLRGIDLEIAKSEVFGVIGRSGAGKSTLVRCLNLLERPTGGRVWVGGRELTSFDERSLRQARRDIGMIFQHFNVLSSRTAADNIALPLELVGLPGPVIRRRVAELLDLVGLTDKGEAYPAELSGGQKQRVGIARALASKPSVLLCDEATSALDPETTKSILALLKDINRRLGLTIVLITHEMHVIKDIADRVAVLDHGRVVEQGRVFDVFTDPQHAVTRAFVHEVLNRDLPEVLVPRLATTRLEGGPVIWRITFTGPSANDPVVSEMVRRFGLSFNILYGHIDYIQGLPYGTLVVEAAGTESARHAALAYLSQKNLSVEVLGHVATPDPVTA.

The ABC transporter domain maps to 2–241; it reads IVTEALTKAF…PQHAVTRAFV (240 aa). ATP is bound at residue 38–45; that stretch reads GRSGAGKS.

It belongs to the ABC transporter superfamily. Methionine importer (TC 3.A.1.24) family. As to quaternary structure, the complex is composed of two ATP-binding proteins (MetN), two transmembrane proteins (MetI) and a solute-binding protein (MetQ).

It localises to the cell inner membrane. The enzyme catalyses L-methionine(out) + ATP + H2O = L-methionine(in) + ADP + phosphate + H(+). The catalysed reaction is D-methionine(out) + ATP + H2O = D-methionine(in) + ADP + phosphate + H(+). In terms of biological role, part of the ABC transporter complex MetNIQ involved in methionine import. Responsible for energy coupling to the transport system. The chain is Methionine import ATP-binding protein MetN from Rhodospirillum rubrum (strain ATCC 11170 / ATH 1.1.1 / DSM 467 / LMG 4362 / NCIMB 8255 / S1).